The following is a 121-amino-acid chain: Large ribosomal subunit protein bL12 (121 aa).

The protein belongs to the bacterial ribosomal protein bL12 family. In terms of assembly, homodimer. Part of the ribosomal stalk of the 50S ribosomal subunit. Forms a multimeric L10(L12)X complex, where L10 forms an elongated spine to which 2 to 4 L12 dimers bind in a sequential fashion. Binds GTP-bound translation factors.

Functionally, forms part of the ribosomal stalk which helps the ribosome interact with GTP-bound translation factors. Is thus essential for accurate translation. The polypeptide is Large ribosomal subunit protein bL12 (Leuconostoc mesenteroides subsp. mesenteroides (strain ATCC 8293 / DSM 20343 / BCRC 11652 / CCM 1803 / JCM 6124 / NCDO 523 / NBRC 100496 / NCIMB 8023 / NCTC 12954 / NRRL B-1118 / 37Y)).